We begin with the raw amino-acid sequence, 287 residues long: Diaminopimelate epimerase (287 aa).

Substrate-binding residues include N11, Q44, and N64. Residue C73 is the Proton donor of the active site. Residues 74-75 (GN), N157, N190, and 208-209 (ER) each bind substrate. C217 acts as the Proton acceptor in catalysis. 218–219 (GT) lines the substrate pocket.

The protein belongs to the diaminopimelate epimerase family. As to quaternary structure, homodimer.

It is found in the cytoplasm. The catalysed reaction is (2S,6S)-2,6-diaminopimelate = meso-2,6-diaminopimelate. It functions in the pathway amino-acid biosynthesis; L-lysine biosynthesis via DAP pathway; DL-2,6-diaminopimelate from LL-2,6-diaminopimelate: step 1/1. Its function is as follows. Catalyzes the stereoinversion of LL-2,6-diaminopimelate (L,L-DAP) to meso-diaminopimelate (meso-DAP), a precursor of L-lysine and an essential component of the bacterial peptidoglycan. The protein is Diaminopimelate epimerase of Halorhodospira halophila (strain DSM 244 / SL1) (Ectothiorhodospira halophila (strain DSM 244 / SL1)).